A 721-amino-acid chain; its full sequence is MTSENHTTIKADSALVMSPTGSTSQAAPFSPSTSKPIQELPDELIQAGWSKCWSKRENRPYYFNRFTNQSLWEMPVLGQHDVISDPLGLNAAPASGEANADAGLGNGQRKRHPSEDASQAGPNSFKRPKVEIPATPTTPTVPISPSTPGVKPWVNTTTDEKQGQASTPAPAPYRPSVVYWDLDIQTNAVIRERAPADHLPPHPEIELQRAQLTTKLRQHYHELCSQREGIEPPRESFNRWLLERKVVDKGLDPLLPSECDPVISPSMFREIMNDIPIRLSRIKYKEEARKLLFKYAEAAKKMIDSRNATPESRKVVKWNVEDTMNWLRRDHSASKEDYMDRLEHLRKQCGPHVASVAKDSVEGICSKIYHISAEYVRRIRQAHLTLLKECNISVDGTESAEVQDRLVYCYPVRLSIPAPPQTRVELHFENDIACLRFKGEMVKVSRGHFNKLELLYRYSCIDDPRFEKFLSRVWCLIKRYQVMFGSGVNEGSGLQGSLPVPVFEALNKQFGVTFECFASPLNCYFKQFCSAFPDIDGFFGSRGPFLSFSPASGSFEANPPFCEELMDAMVTHFEDLLGRSSEPLSFIIFVPEWRDPPTPALTRMEASRFRRHQMTVPAFEHEYRSGSQHICKREEIYYKAIHGTAVIFLQNNAGFAKWEPTTERIQELLAAYKVSGRSLPSPGPSSTNTGEKDSKPAPERTAPSQDNSSPVDKTAQDTTNT.

2 stretches are compositionally biased toward polar residues: residues 1-10 (MTSENHTTIK) and 19-36 (PTGSTSQAAPFSPSTSKP). The segment at 1–37 (MTSENHTTIKADSALVMSPTGSTSQAAPFSPSTSKPI) is disordered. Positions 43–77 (ELIQAGWSKCWSKRENRPYYFNRFTNQSLWEMPVL) constitute a WW domain. A disordered region spans residues 93–170 (PASGEANADA…KQGQASTPAP (78 aa)). A compositionally biased stretch (low complexity) spans 132-148 (IPATPTTPTVPISPSTP). Arg-239 and Arg-269 together coordinate substrate. 558-561 (NPPF) serves as a coordination point for S-adenosyl-L-methionine. Residues Glu-563 and 593–597 (WRDPP) each bind substrate. 619–621 (FEH) contributes to the S-adenosyl-L-methionine binding site. Low complexity predominate over residues 675 to 686 (SGRSLPSPGPSS). Positions 675–721 (SGRSLPSPGPSSTNTGEKDSKPAPERTAPSQDNSSPVDKTAQDTTNT) are disordered. Over residues 702-721 (APSQDNSSPVDKTAQDTTNT) the composition is skewed to polar residues.

It belongs to the CAPAM family.

It localises to the nucleus. It catalyses the reaction a 5'-end (N(7)-methyl 5'-triphosphoguanosine)-(2'-O-methyladenosine) in mRNA + S-adenosyl-L-methionine = a 5'-end (N(7)-methyl 5'-triphosphoguanosine)-(N(6),2'-O-dimethyladenosine) in mRNA + S-adenosyl-L-homocysteine + H(+). Its activity is regulated as follows. Cap-specific adenosine methyltransferase activity is inhibited by zinc. In terms of biological role, cap-specific adenosine methyltransferase that catalyzes formation of N(6),2'-O-dimethyladenosine cap (m6A(m)) by methylating the adenosine at the second transcribed position of capped mRNAs. In Danio rerio (Zebrafish), this protein is mRNA (2'-O-methyladenosine-N(6)-)-methyltransferase (pcif1).